We begin with the raw amino-acid sequence, 156 residues long: S-ribosylhomocysteine lyase (156 aa).

3 residues coordinate Fe cation: histidine 56, histidine 60, and cysteine 123.

The protein belongs to the LuxS family. In terms of assembly, homodimer. It depends on Fe cation as a cofactor.

It carries out the reaction S-(5-deoxy-D-ribos-5-yl)-L-homocysteine = (S)-4,5-dihydroxypentane-2,3-dione + L-homocysteine. Involved in the synthesis of autoinducer 2 (AI-2) which is secreted by bacteria and is used to communicate both the cell density and the metabolic potential of the environment. The regulation of gene expression in response to changes in cell density is called quorum sensing. Catalyzes the transformation of S-ribosylhomocysteine (RHC) to homocysteine (HC) and 4,5-dihydroxy-2,3-pentadione (DPD). This Staphylococcus haemolyticus (strain JCSC1435) protein is S-ribosylhomocysteine lyase.